The following is a 293-amino-acid chain: Heterogeneous nuclear ribonucleoprotein D-like-A (293 aa).

The segment at 1–21 (MAGFGAAPDFNEGSKINASKN) is disordered. 2 RRM domains span residues 26–108 (GKMF…KGKE) and 111–188 (KKVF…AAQP). Disordered regions lie at residues 193-224 (RQQQ…GWNQ) and 274-293 (QSTY…YQPY). The span at 202–222 (GGRGAVTGRGGTRGRGRGQGW) shows a compositional bias: gly residues.

Its subcellular location is the nucleus. It is found in the cytoplasm. Functionally, acts as a transcriptional regulator. Binds DNA and RNA. The polypeptide is Heterogeneous nuclear ribonucleoprotein D-like-A (hnrnpdl-a) (Xenopus laevis (African clawed frog)).